A 498-amino-acid chain; its full sequence is Protein adenylyltransferase Fic (498 aa).

Residues 43–63 form a helical membrane-spanning segment; it reads FAFLAFLAGSFLAFSLHALIS. TPR repeat units lie at residues 126–159 and 160–194; these read ALSS…APRH and PEVL…NPSH. Residues 251–256 carry the Inhibitory (S/T)XXXE(G/N) motif motif; the sequence is SVGIEG. ATP contacts are provided by residues E255 and 336–339; that span reads VGGH. Positions 305 to 440 constitute a Fido domain; sequence ITIKDILELH…IRPFVRFIAD (136 aa). The active site involves H383. ATP contacts are provided by residues 387-394, 419-420, and N427; these read DGNGRTSR and YY.

Belongs to the fic family. Homodimer.

The protein localises to the membrane. The enzyme catalyses L-tyrosyl-[protein] + ATP = O-(5'-adenylyl)-L-tyrosyl-[protein] + diphosphate. The catalysed reaction is L-threonyl-[protein] + ATP = 3-O-(5'-adenylyl)-L-threonyl-[protein] + diphosphate. It carries out the reaction 3-O-(5'-adenylyl)-L-threonyl-[protein] + H2O = L-threonyl-[protein] + AMP + H(+). With respect to regulation, the side chain of Glu-255 determines which of the two opposing activities (AMPylase or de-AMPylase) will take place. In response to endoplasmic reticulum stress, mediates de-AMPylase activity. Adenylyltransferase activity is inhibited by the inhibitory helix present at the N-terminus: Glu-255 binds ATP and competes with ATP-binding at Arg-394, thereby preventing adenylyltransferase activity. In unstressed cells, disengagement of Glu-255 promotes adenylyltransferase activity. Activation dissociates ATP-binding from Glu-255, allowing ordered binding of the entire ATP moiety with the alpha-phosphate in an orientation that is productive for accepting an incoming target hydroxyl side chain. Protein that can both mediate the addition of adenosine 5'-monophosphate (AMP) to specific residues of target proteins (AMPylation), and the removal of the same modification from target proteins (de-AMPylation), depending on the context. The side chain of Glu-255 determines which of the two opposing activities (AMPylase or de-AMPylase) will take place. Acts as a key regulator of the unfolded protein response (UPR) by mediating AMPylation or de-AMPylation of Hsc70-3/BiP. In unstressed cells, acts as an adenylyltransferase by mediating AMPylation of Hsc70-3/BiP at 'Thr-518', thereby inactivating it. In response to endoplasmic reticulum stress, acts as a phosphodiesterase by mediating removal of ATP (de-AMPylation) from Hsc70-3/BiP at 'Thr-518', leading to restore HSPA5/BiP activity. In Drosophila willistoni (Fruit fly), this protein is Protein adenylyltransferase Fic.